The following is a 347-amino-acid chain: Cell shape-determining protein MreB (347 aa).

ATP is bound by residues 19-21 (TAN), 168-170 (GGT), 216-219 (ERIK), and 296-299 (GGAL).

This sequence belongs to the FtsA/MreB family. Forms polymers.

It is found in the cytoplasm. In terms of biological role, forms membrane-associated dynamic filaments that are essential for cell shape determination. Acts by regulating cell wall synthesis and cell elongation, and thus cell shape. A feedback loop between cell geometry and MreB localization may maintain elongated cell shape by targeting cell wall growth to regions of negative cell wall curvature. This chain is Cell shape-determining protein MreB, found in Escherichia coli O6:H1 (strain CFT073 / ATCC 700928 / UPEC).